Consider the following 255-residue polypeptide: Indole-3-glycerol phosphate synthase (255 aa).

This sequence belongs to the TrpC family.

The catalysed reaction is 1-(2-carboxyphenylamino)-1-deoxy-D-ribulose 5-phosphate + H(+) = (1S,2R)-1-C-(indol-3-yl)glycerol 3-phosphate + CO2 + H2O. It participates in amino-acid biosynthesis; L-tryptophan biosynthesis; L-tryptophan from chorismate: step 4/5. This is Indole-3-glycerol phosphate synthase from Streptococcus thermophilus (strain ATCC BAA-491 / LMD-9).